The sequence spans 183 residues: Ankyrin repeat domain-containing protein 39 (183 aa).

ANK repeat units lie at residues 30-59 (DFERGIWSAALNGDLGRVKYLIQKAVDPSQ), 63-92 (AGYTALHYASRNGHYAVCQFLLESGAKCDA), 96-125 (GGATALHRASYCGHTDIARLLLSHGSNPRL), and 129-158 (DGMTSLHKAAEKGHVDICSLLLQHSPALKA). A Phosphoserine modification is found at S153.

It belongs to the ANKRD39 family.

This Bos taurus (Bovine) protein is Ankyrin repeat domain-containing protein 39 (ANKRD39).